A 427-amino-acid polypeptide reads, in one-letter code: Enolase (427 aa).

Q163 is a (2R)-2-phosphoglycerate binding site. Residue E205 is the Proton donor of the active site. D242, E285, and D312 together coordinate Mg(2+). The (2R)-2-phosphoglycerate site is built by K337, R366, S367, and K388. Catalysis depends on K337, which acts as the Proton acceptor.

It belongs to the enolase family. Mg(2+) is required as a cofactor.

The protein localises to the cytoplasm. The protein resides in the secreted. It is found in the cell surface. The catalysed reaction is (2R)-2-phosphoglycerate = phosphoenolpyruvate + H2O. The protein operates within carbohydrate degradation; glycolysis; pyruvate from D-glyceraldehyde 3-phosphate: step 4/5. Its function is as follows. Catalyzes the reversible conversion of 2-phosphoglycerate (2-PG) into phosphoenolpyruvate (PEP). It is essential for the degradation of carbohydrates via glycolysis. The protein is Enolase of Burkholderia ambifaria (strain MC40-6).